A 375-amino-acid polypeptide reads, in one-letter code: Alanine racemase (375 aa).

The active-site Proton acceptor; specific for D-alanine is the Lys-45. Lys-45 carries the post-translational modification N6-(pyridoxal phosphate)lysine. Arg-141 is a substrate binding site. Tyr-270 (proton acceptor; specific for L-alanine) is an active-site residue. Position 318 (Met-318) interacts with substrate.

It belongs to the alanine racemase family. Pyridoxal 5'-phosphate is required as a cofactor.

The catalysed reaction is L-alanine = D-alanine. Its pathway is amino-acid biosynthesis; D-alanine biosynthesis; D-alanine from L-alanine: step 1/1. In terms of biological role, catalyzes the interconversion of L-alanine and D-alanine. May also act on other amino acids. The protein is Alanine racemase (alr) of Pseudoalteromonas atlantica (strain T6c / ATCC BAA-1087).